Consider the following 176-residue polypeptide: Large ribosomal subunit protein uL6 (176 aa).

Residues 151-169 (RPPEPYKGRGIKYTDEHIQ) are compositionally biased toward basic and acidic residues. Residues 151–176 (RPPEPYKGRGIKYTDEHIQRKAGKTK) are disordered.

The protein belongs to the universal ribosomal protein uL6 family. In terms of assembly, part of the 50S ribosomal subunit.

This protein binds to the 23S rRNA, and is important in its secondary structure. It is located near the subunit interface in the base of the L7/L12 stalk, and near the tRNA binding site of the peptidyltransferase center. In Desulfosudis oleivorans (strain DSM 6200 / JCM 39069 / Hxd3) (Desulfococcus oleovorans), this protein is Large ribosomal subunit protein uL6.